Reading from the N-terminus, the 462-residue chain is Argininosuccinate lyase (462 aa).

Belongs to the lyase 1 family. Argininosuccinate lyase subfamily.

It is found in the cytoplasm. It catalyses the reaction 2-(N(omega)-L-arginino)succinate = fumarate + L-arginine. It functions in the pathway amino-acid biosynthesis; L-arginine biosynthesis; L-arginine from L-ornithine and carbamoyl phosphate: step 3/3. The polypeptide is Argininosuccinate lyase (Ehrlichia ruminantium (strain Welgevonden)).